The following is a 612-amino-acid chain: uncharacterized protein (612 aa).

Its subcellular location is the plastid. The protein localises to the chloroplast. This is an uncharacterized protein from Pyropia yezoensis (Susabi-nori).